Consider the following 1105-residue polypeptide: MAATASAGVPATVSEKQEFYQLLKNLINPSCMVRRQAEEIYENIPGLCKTTFLLDAVRNRRAGYEVRQMAAALLRRLLSSGFEEVYPNLPADVQRDVKIELILAVKLETHASMRKKLCDIFAVLARNLIDEDGTNHWPEGLKFLIDSIYSKNVVLWEVALHVFWHFPGIFGTQERHDLDIIKRLLDQCIQDQEHPAIRTLSARAAAAFVLANENNIALFKDFADLLPGILQAVNDSCYQDDDSVLESLVEIADTVPKYLGPYLEDTLQLSLKLCGDSRLSNLQRQLALEVIVTLSETATPMLKKHTNIIAQAVPHILAMMVDLQDDEDWVNADEMEEDDFDSNAVAAESALDRLACGLGGKVVLPMTKEHIMQMLQSPDWKYRHAGLMALSAIGEGCHQQMESILDETVNSVLLFLQDPHPRVRAAACTTLGQMATDFAPNFQKKFHETVIAALLRTMENQGNQRVQSHAASALIIFIEDCPKSLLVLYVDSMVKNLHSVLVIKLQELIRNGTKLALEQLVTTIASVADTIEEKFVPYYDIFMPSLKHIVELAVQKELKLLRGKTIECISHIGLAVGKEKFMQDASNVMQLLLKTQSDLNNMEDDDPQTSYMVSAWARMCKILGKDFQQYLPLVIEPLIKTASAKPDVALLDTQDVENMSDDDGWQFVNLGDQQSFGIKTSGLEAKATACQMLVYYAKELREGFVEYTEQVVKLMVPLLKFYFHDNVRVAAAESMPFLLECARIRGPEYLAQMWQFICDPLIKAIGTEPDTDVLSEIMNSFAKSIEVMGDGCLNDEHLEELGGILKAKLEGHFKNQELRQVKRQEENYDQQVEMSLQDEDECDVYILTKVSDILHSLFSTYKEKILPWFEQLLPLIVNLICSSRPWPDRQWGLCIFDDIIEHCSPTSFKYVEYFRWPMLLNMRDNNPEVRQAAAYGLGVMAQFGGDDYRSLCSEAVPLLVKVIKCANSKTKKNVIATENCISAIGKILKFKPNCVNVDEVLPHWLSWLPLHEDKEEAIQTLSFLCDLIESNHPVVIGPNNSNLPKIISIIAEGKINETINYEDPCAKRLANVVRQVQTSEDLWLECVSQLDDEQQEALQELLNFA.

Ala2 carries the post-translational modification N-acetylalanine. HEAT repeat units lie at residues 219 to 257 (FKDF…TVPK), 361 to 399 (KVVL…GCHQ), 402 to 440 (ESIL…DFAP), and 444 to 483 (KKFH…DCPK). The interval 333 to 383 (DEMEEDDFDSNAVAAESALDRLACGLGGKVVLPMTKEHIMQMLQSPDWKYR) is ran-GTP binding. Positions 806-842 (KAKLEGHFKNQELRQVKRQEENYDQQVEMSLQDEDEC) form a coiled coil. HEAT repeat units lie at residues 866-905 (LPWF…HCSP), 908-946 (FKYV…FGGD), and 949-987 (RSLC…IGKI).

The protein belongs to the importin beta family.

It localises to the cytoplasm. The protein resides in the nucleus. In terms of biological role, may function in nuclear protein import as nuclear transport receptor. In Homo sapiens (Human), this protein is Ran-binding protein 6 (RANBP6).